The sequence spans 1060 residues: Carbamoyl phosphate synthase large chain (1060 aa).

Residues 1 to 401 form a carboxyphosphate synthetic domain region; it reads MPKRTDIRKI…SLLKACRSLE (401 aa). The ATP site is built by R129, R169, G175, G176, R208, I210, E215, G241, I242, H243, Q284, and E298. The ATP-grasp 1 domain maps to 133–327; the sequence is KQLMEELNQP…IAKLAAKIAV (195 aa). Residues Q284, E298, and N300 each contribute to the Mg(2+) site. Residues Q284, E298, and N300 each contribute to the Mn(2+) site. The tract at residues 402-546 is oligomerization domain; that stretch reads IGVDHIKIAD…YSTYAVENES (145 aa). Residues 547-929 are carbamoyl phosphate synthetic domain; the sequence is LISDKASILV…ALYKAFEAAY (383 aa). Residues 671 to 861 form the ATP-grasp 2 domain; sequence EATLQALNIP…MAQVATKVIL (191 aa). R707, A746, L748, E752, G777, V778, H779, S780, Q820, and E832 together coordinate ATP. Mg(2+) is bound by residues Q820, E832, and N834. The Mn(2+) site is built by Q820, E832, and N834. One can recognise an MGS-like domain in the interval 930-1060; that stretch reads LHMPDYGNIV…SRAFTLKVLD (131 aa). The allosteric domain stretch occupies residues 930–1060; the sequence is LHMPDYGNIV…SRAFTLKVLD (131 aa).

Belongs to the CarB family. In terms of assembly, composed of two chains; the small (or glutamine) chain promotes the hydrolysis of glutamine to ammonia, which is used by the large (or ammonia) chain to synthesize carbamoyl phosphate. Tetramer of heterodimers (alpha,beta)4. The cofactor is Mg(2+). It depends on Mn(2+) as a cofactor.

The catalysed reaction is hydrogencarbonate + L-glutamine + 2 ATP + H2O = carbamoyl phosphate + L-glutamate + 2 ADP + phosphate + 2 H(+). It catalyses the reaction hydrogencarbonate + NH4(+) + 2 ATP = carbamoyl phosphate + 2 ADP + phosphate + 2 H(+). It functions in the pathway amino-acid biosynthesis; L-arginine biosynthesis; carbamoyl phosphate from bicarbonate: step 1/1. The protein operates within pyrimidine metabolism; UMP biosynthesis via de novo pathway; (S)-dihydroorotate from bicarbonate: step 1/3. Functionally, large subunit of the glutamine-dependent carbamoyl phosphate synthetase (CPSase). CPSase catalyzes the formation of carbamoyl phosphate from the ammonia moiety of glutamine, carbonate, and phosphate donated by ATP, constituting the first step of 2 biosynthetic pathways, one leading to arginine and/or urea and the other to pyrimidine nucleotides. The large subunit (synthetase) binds the substrates ammonia (free or transferred from glutamine from the small subunit), hydrogencarbonate and ATP and carries out an ATP-coupled ligase reaction, activating hydrogencarbonate by forming carboxy phosphate which reacts with ammonia to form carbamoyl phosphate. The chain is Carbamoyl phosphate synthase large chain from Streptococcus agalactiae serotype V (strain ATCC BAA-611 / 2603 V/R).